The chain runs to 190 residues: Glutathione peroxidase 2 (190 aa).

U40 is an active-site residue. Position 40 (U40) is a non-standard amino acid, selenocysteine.

Belongs to the glutathione peroxidase family. As to quaternary structure, homotetramer.

It is found in the cytoplasm. Its subcellular location is the cytosol. The catalysed reaction is 2 glutathione + H2O2 = glutathione disulfide + 2 H2O. It catalyses the reaction a hydroperoxy polyunsaturated fatty acid + 2 glutathione = a hydroxy polyunsaturated fatty acid + glutathione disulfide + H2O. The enzyme catalyses tert-butyl hydroperoxide + 2 glutathione = tert-butanol + glutathione disulfide + H2O. It carries out the reaction cumene hydroperoxide + 2 glutathione = 2-phenylpropan-2-ol + glutathione disulfide + H2O. The catalysed reaction is (13S)-hydroperoxy-(9Z,11E)-octadecadienoate + 2 glutathione = (13S)-hydroxy-(9Z,11E)-octadecadienoate + glutathione disulfide + H2O. It catalyses the reaction (5S)-hydroperoxy-(6E,8Z,11Z,14Z)-eicosatetraenoate + 2 glutathione = (5S)-hydroxy-(6E,8Z,11Z,14Z)-eicosatetraenoate + glutathione disulfide + H2O. The enzyme catalyses (12R)-hydroperoxy-(5Z,8Z,10E,14Z)-eicosatetraenoate + 2 glutathione = (12R)-hydroxy-(5Z,8Z,10E,14Z)-eicosatetraenoate + glutathione disulfide + H2O. It carries out the reaction (15S)-hydroperoxy-(5Z,8Z,11Z,13E)-eicosatetraenoate + 2 glutathione = (15S)-hydroxy-(5Z,8Z,11Z,13E)-eicosatetraenoate + glutathione disulfide + H2O. Its function is as follows. Catalyzes the reduction of hydroperoxides in a glutathione-dependent manner thus regulating cellular redox homeostasis. Can reduce small soluble hydroperoxides such as H2O2, cumene hydroperoxide and tert-butyl hydroperoxide, as well as several fatty acid-derived hydroperoxides. Cannot reduce phosphatidycholine hydroperoxide. The chain is Glutathione peroxidase 2 (Gpx2) from Mus musculus (Mouse).